We begin with the raw amino-acid sequence, 181 residues long: Diphosphoinositol polyphosphate phosphohydrolase NUDT4B (181 aa).

Substrate-binding positions include Arg10, 18–20 (KKR), and 39–41 (SSR). The region spanning 18 to 145 (KKRAACLCFR…VHAEYLEKLK (128 aa)) is the Nudix hydrolase domain. Residues Gly50 and Glu66 each coordinate Mg(2+). A Nudix box motif is present at residues 51–72 (GGMEPEEEPGGAAVREVYEEAG). Glu69 acts as the Proton acceptor in catalysis. Glu70 provides a ligand contact to Mg(2+). Substrate is bound by residues 90 to 92 (RKH), Arg116, and Lys134.

This sequence belongs to the Nudix hydrolase family. DIPP subfamily. The cofactor is Mg(2+). It depends on Mn(2+) as a cofactor.

The protein localises to the cytoplasm. The enzyme catalyses diphospho-myo-inositol polyphosphate + H2O = myo-inositol polyphosphate + phosphate.. In terms of biological role, cleaves a beta-phosphate from the diphosphate groups in PP-InsP5 (diphosphoinositol pentakisphosphate), PP-InsP4 and [PP]2-InsP4 (bisdiphosphoinositol tetrakisphosphate), suggesting that it may play a role in signal transduction. Also able to catalyze the hydrolysis of dinucleoside oligophosphate Ap6A, but not Ap5A. The major reaction products are ADP and p4a from Ap6A. Also able to hydrolyze 5-phosphoribose 1-diphosphate. Does not play a role in U8 snoRNA decapping activity. Binds U8 snoRNA. The protein is Diphosphoinositol polyphosphate phosphohydrolase NUDT4B of Homo sapiens (Human).